Consider the following 290-residue polypeptide: MKVIVLLLVLAVMQPVIQSQPFPGTEELPMTRRPPKGELEYWCTYAKSCDFCWNCRHGICKNKVFEKHPLIKKNDYIQICRVSRYNNRCSYFTDSRIRRFHIMSCTNPTYYDWFDELMQVKEDRVIDVENIKHTCLCMIATIALIGYVRKQYSRMRMQAATRLLIFLGLYVLLGILMTNIIMNLPLSTDNPMQMRRPPERDLKFWCTYAKHCDFCWTCKDGMCKNKVFSDHPIITQNDYIVNCTVSRWHDRCMYEAHFRIHYQHNMNCSQPKDLEWFIELKRHVINQDDL.

Positions Met-1–Ser-19 are cleaved as a signal peptide. An A repeat occupies Met-1–Ala-160. 2 helical membrane passes run Val-128–Val-148 and Leu-163–Asn-183. One copy of the B repeat lies at Thr-161–Leu-290.

The protein belongs to the asfivirus MGF 110 family.

It is found in the membrane. The polypeptide is Protein MGF 110-9L (Ornithodoros (relapsing fever ticks)).